A 691-amino-acid polypeptide reads, in one-letter code: Seven transmembrane domain-containing tyrosine-protein kinase 1 (691 aa).

At 1–33 (MDTSCVSINQCGFCTYLFNRSIPLAGEGDGAIM) the chain is on the extracellular side. A helical transmembrane segment spans residues 34–54 (FNTMVDSMALGYIFSALYLLF). The Cytoplasmic portion of the chain corresponds to 55–126 (RLQRSYTYLQ…PRIINSTYFK (72 aa)). The chain crosses the membrane as a helical span at residues 127 to 144 (YTLFVSLWLAFEGLLLLF). Residues 145–153 (LPPNSLAYP) are Extracellular-facing. Residues 154-176 (AFVIIVGTGHIVTDNWVLVFLYG) traverse the membrane as a helical segment. At 177-186 (KEDDRFSARR) the chain is on the cytoplasmic side. Residues 187-207 (SFYSCTLLYLIICCTTLASFF) traverse the membrane as a helical segment. The Extracellular segment spans residues 208–227 (DDQTMCKKNDCQTFMFQDEY). Residues 228–248 (TSLAITVASLVVYTIVLGMTI) traverse the membrane as a helical segment. The Cytoplasmic segment spans residues 249–258 (KRSFLRPTGR). Residues 259–279 (IWLLFLMGYNCISSVGALLNI) form a helical membrane-spanning segment. Residues 280–284 (LDVDA) are Extracellular-facing. Residues 285–305 (GYCFLGIAAIIYSFSYGPLLF) form a helical membrane-spanning segment. Residues 306–691 (RTCGNDTNLL…GAEEFHYIDG (386 aa)) lie on the Cytoplasmic side of the membrane. One can recognise a Protein kinase domain in the interval 363 to 634 (FKFGQVIGEG…ANVPISNTYV (272 aa)). ATP-binding positions include 369–377 (IGEGYFGEV) and Lys-390. The active-site Proton acceptor is Asp-493.

This sequence belongs to the protein kinase superfamily. TKL Tyr protein kinase family.

Its subcellular location is the membrane. The enzyme catalyses L-tyrosyl-[protein] + ATP = O-phospho-L-tyrosyl-[protein] + ADP + H(+). The protein is Seven transmembrane domain-containing tyrosine-protein kinase 1 (7tmk1) of Dictyostelium discoideum (Social amoeba).